A 421-amino-acid chain; its full sequence is UDP-N-acetylglucosamine 1-carboxyvinyltransferase (421 aa).

22–23 (KN) contacts phosphoenolpyruvate. Arg93 is a UDP-N-acetyl-alpha-D-glucosamine binding site. Cys117 serves as the catalytic Proton donor. Cys117 carries the post-translational modification 2-(S-cysteinyl)pyruvic acid O-phosphothioketal. Residues 122-126 (RPVDL), Asp308, and Ile330 contribute to the UDP-N-acetyl-alpha-D-glucosamine site.

Belongs to the EPSP synthase family. MurA subfamily.

The protein resides in the cytoplasm. It carries out the reaction phosphoenolpyruvate + UDP-N-acetyl-alpha-D-glucosamine = UDP-N-acetyl-3-O-(1-carboxyvinyl)-alpha-D-glucosamine + phosphate. The protein operates within cell wall biogenesis; peptidoglycan biosynthesis. In terms of biological role, cell wall formation. Adds enolpyruvyl to UDP-N-acetylglucosamine. This is UDP-N-acetylglucosamine 1-carboxyvinyltransferase from Pseudomonas putida (strain ATCC 700007 / DSM 6899 / JCM 31910 / BCRC 17059 / LMG 24140 / F1).